The sequence spans 219 residues: Ribose-5-phosphate isomerase A (219 aa).

Residues 28–31, 81–84, and 94–97 contribute to the substrate site; these read SGST, DGAD, and KGGG. The Proton acceptor role is filled by Glu-103. Lys-121 contacts substrate.

This sequence belongs to the ribose 5-phosphate isomerase family. As to quaternary structure, homodimer.

The enzyme catalyses aldehydo-D-ribose 5-phosphate = D-ribulose 5-phosphate. The protein operates within carbohydrate degradation; pentose phosphate pathway; D-ribose 5-phosphate from D-ribulose 5-phosphate (non-oxidative stage): step 1/1. Functionally, catalyzes the reversible conversion of ribose-5-phosphate to ribulose 5-phosphate. This is Ribose-5-phosphate isomerase A from Haemophilus influenzae (strain PittEE).